The following is a 298-amino-acid chain: Protease HtpX homolog (298 aa).

Transmembrane regions (helical) follow at residues 14–34 (VVLL…AGYL) and 39–59 (YAMG…SMIF). His143 is a binding site for Zn(2+). Glu144 is an active-site residue. His147 provides a ligand contact to Zn(2+). Helical transmembrane passes span 158-178 (IAVA…RMLW) and 197-217 (IITL…ASLI). Position 226 (Glu226) interacts with Zn(2+).

This sequence belongs to the peptidase M48B family. Zn(2+) is required as a cofactor.

It is found in the cell membrane. This Streptococcus pyogenes serotype M49 (strain NZ131) protein is Protease HtpX homolog.